The primary structure comprises 480 residues: UDP-N-acetylmuramate--L-alanine ligase (480 aa).

125–131 (GTHGKTT) lines the ATP pocket.

Belongs to the MurCDEF family.

The protein resides in the cytoplasm. It catalyses the reaction UDP-N-acetyl-alpha-D-muramate + L-alanine + ATP = UDP-N-acetyl-alpha-D-muramoyl-L-alanine + ADP + phosphate + H(+). It functions in the pathway cell wall biogenesis; peptidoglycan biosynthesis. Cell wall formation. In Ectopseudomonas mendocina (strain ymp) (Pseudomonas mendocina), this protein is UDP-N-acetylmuramate--L-alanine ligase.